The primary structure comprises 140 residues: MAQNKIEKSEEDWKSVLTPEQYHVLRQKGTERPFSGNLYYNKEKGIYTCAACGQELFSSDTKFESGTGWPSFYDVISSDRVRLHEDNSYFMKRIEVVCSRCGSHLGHVFEDGPEPTGQRYCINSVSLGFTKEEDTGKEKE.

A MsrB domain is found at 10-132 (EEDWKSVLTP…NSVSLGFTKE (123 aa)). Residues cysteine 49, cysteine 52, cysteine 98, and cysteine 101 each contribute to the Zn(2+) site. Cysteine 121 acts as the Nucleophile in catalysis.

It belongs to the MsrB Met sulfoxide reductase family. Zn(2+) is required as a cofactor.

The enzyme catalyses L-methionyl-[protein] + [thioredoxin]-disulfide + H2O = L-methionyl-(R)-S-oxide-[protein] + [thioredoxin]-dithiol. The sequence is that of Peptide methionine sulfoxide reductase MsrB from Methanosarcina mazei (strain ATCC BAA-159 / DSM 3647 / Goe1 / Go1 / JCM 11833 / OCM 88) (Methanosarcina frisia).